The chain runs to 63 residues: Protein BP4A (63 aa).

In terms of tissue distribution, pollen specific.

The protein is Protein BP4A (BP4A) of Brassica napus (Rape).